Consider the following 352-residue polypeptide: Maleylacetate reductase (352 aa).

NAD(+)-binding positions include 93-94 (GS) and 115-119 (TTYAG).

Belongs to the iron-containing alcohol dehydrogenase family. The cofactor is The maleylacetate reductase family of enzymes does not require any metal ion for activity, despite being related to the family III metal-dependent polyol dehydrogenases..

It catalyses the reaction 3-oxoadipate + NAD(+) = maleylacetate + NADH + H(+). The protein operates within xenobiotic degradation; gamma-hexachlorocyclohexane degradation. Functionally, catalyzes the NADH-dependent reduction of maleylacetate to beta-ketoadipate, a step in the degradation of gamma-hexachlorocyclohexane (gamma-HCH or lindane). Has an essential role in this assimilation pathway that allows S.japonicum UT26 to grow on gamma-HCH as the sole source of carbon and energy. The sequence is that of Maleylacetate reductase from Sphingobium indicum (strain DSM 16413 / CCM 7287 / MTCC 6362 / UT26 / NBRC 101211 / UT26S) (Sphingobium japonicum).